Here is a 150-residue protein sequence, read N- to C-terminus: Large ribosomal subunit protein uL11 (150 aa).

The protein belongs to the universal ribosomal protein uL11 family. Part of the ribosomal stalk of the 50S ribosomal subunit. Interacts with L10 and the large rRNA to form the base of the stalk. L10 forms an elongated spine to which L12 dimers bind in a sequential fashion forming a multimeric L10(L12)X complex. Post-translationally, one or more lysine residues are methylated.

In terms of biological role, forms part of the ribosomal stalk which helps the ribosome interact with GTP-bound translation factors. The chain is Large ribosomal subunit protein uL11 from Azobacteroides pseudotrichonymphae genomovar. CFP2.